A 453-amino-acid polypeptide reads, in one-letter code: Pup--protein ligase (453 aa).

E9 lines the Mg(2+) pocket. R53 provides a ligand contact to ATP. Y55 provides a ligand contact to Mg(2+). D57 (proton acceptor) is an active-site residue. E63 contacts Mg(2+). 2 residues coordinate ATP: T66 and W420.

Belongs to the Pup ligase/Pup deamidase family. Pup-conjugating enzyme subfamily.

It catalyses the reaction ATP + [prokaryotic ubiquitin-like protein]-L-glutamate + [protein]-L-lysine = ADP + phosphate + N(6)-([prokaryotic ubiquitin-like protein]-gamma-L-glutamyl)-[protein]-L-lysine.. The protein operates within protein degradation; proteasomal Pup-dependent pathway. Its pathway is protein modification; protein pupylation. Its function is as follows. Catalyzes the covalent attachment of the prokaryotic ubiquitin-like protein modifier Pup to the proteasomal substrate proteins, thereby targeting them for proteasomal degradation. This tagging system is termed pupylation. The ligation reaction involves the side-chain carboxylate of the C-terminal glutamate of Pup and the side-chain amino group of a substrate lysine. This Streptomyces scabiei (strain 87.22) protein is Pup--protein ligase.